Here is a 394-residue protein sequence, read N- to C-terminus: Penicillopepsin-3 (394 aa).

A signal peptide spans 1–20 (MVSFTQLQLAFLGLSALGAA). Residues 21–70 (VPVTGTSEKKTFSLNQVKVAGTKTKNPAEHYANALRKYGAEVPSHVLAAA) constitute a propeptide, activation peptide. One can recognise a Peptidase A1 domain in the interval 87–392 (YLTPIDVGGT…DASGPRLGFA (306 aa)). Active-site residues include Asp-103 and Asp-284. The cysteines at positions 320 and 355 are disulfide-linked.

It belongs to the peptidase A1 family. As to quaternary structure, monomer.

The protein resides in the secreted. The enzyme catalyses Hydrolysis of proteins with broad specificity similar to that of pepsin A, preferring hydrophobic residues at P1 and P1', but also cleaving 20-Gly-|-Glu-21 in the B chain of insulin. Clots milk, and activates trypsinogen.. Functionally, secreted aspartic endopeptidase that allows assimilation of proteinaceous substrates. The scissile peptide bond is attacked by a nucleophilic water molecule activated by two aspartic residues in the active site. Shows a broad primary substrate specificity. Favors hydrophobic residues at the P1 and P1' positions, but can also activate trypsinogen and hydrolyze the B chain of insulin between positions 'Gly-20' and 'Glu-21'. In Penicillium janthinellum (Penicillium vitale), this protein is Penicillopepsin-3.